An 82-amino-acid chain; its full sequence is Escargot/snail protein homolog (82 aa).

4 C2H2-type zinc fingers span residues 1-5, 18-40, 44-66, and 72-82; these read HQQFH, FSCK…IRTH, CKCP…IRTH, and FSCQHCQSAFV.

It belongs to the snail C2H2-type zinc-finger protein family.

It localises to the nucleus. The sequence is that of Escargot/snail protein homolog from Calliphora vicina (Blue blowfly).